Reading from the N-terminus, the 232-residue chain is Large ribosomal subunit protein uL1 (232 aa).

This sequence belongs to the universal ribosomal protein uL1 family. In terms of assembly, part of the 50S ribosomal subunit.

In terms of biological role, binds directly to 23S rRNA. The L1 stalk is quite mobile in the ribosome, and is involved in E site tRNA release. Functionally, protein L1 is also a translational repressor protein, it controls the translation of the L11 operon by binding to its mRNA. The sequence is that of Large ribosomal subunit protein uL1 from Burkholderia ambifaria (strain MC40-6).